An 841-amino-acid polypeptide reads, in one-letter code: Translation initiation factor IF-2 (841 aa).

Residues 94–255 (QRSPEEIEAE…RNAHGFQSPT (162 aa)) form a disordered region. The segment covering 96–135 (SPEEIEAERKREMDERRAVENAARQKAEEEAKRRAEEDAR) has biased composition (basic and acidic residues). Residues 136–175 (NQPAAGQPASAPAQPVAAAEPVREAPAAAAPAPASAAPSA) show a composition bias toward low complexity. Basic and acidic residues-rich tracts occupy residues 176 to 217 (DARK…EKAP) and 225 to 234 (TTDEESDSFR). Residues 235–248 (RGGRGKGKLKKRNA) show a composition bias toward basic residues. The 170-residue stretch at 341 to 510 (SRAPVVTVMG…LLQAEVLELK (170 aa)) folds into the tr-type G domain. The tract at residues 350–357 (GHVDHGKT) is G1. Residue 350–357 (GHVDHGKT) coordinates GTP. The tract at residues 375 to 379 (GITQH) is G2. The tract at residues 396 to 399 (DTPG) is G3. GTP is bound by residues 396 to 400 (DTPGH) and 450 to 453 (NKID). The interval 450-453 (NKID) is G4. The segment at 486–488 (SAK) is G5.

The protein belongs to the TRAFAC class translation factor GTPase superfamily. Classic translation factor GTPase family. IF-2 subfamily.

It localises to the cytoplasm. Its function is as follows. One of the essential components for the initiation of protein synthesis. Protects formylmethionyl-tRNA from spontaneous hydrolysis and promotes its binding to the 30S ribosomal subunits. Also involved in the hydrolysis of GTP during the formation of the 70S ribosomal complex. This chain is Translation initiation factor IF-2, found in Pseudomonas syringae pv. tomato (strain ATCC BAA-871 / DC3000).